The sequence spans 119 residues: Small ribosomal subunit protein uS13 (119 aa).

A compositionally biased stretch (basic residues) spans 92–110; that stretch reads RKDTCKRSTKKNARTRKGP. The tract at residues 92-119 is disordered; that stretch reads RKDTCKRSTKKNARTRKGPKKDNRWKER.

Belongs to the universal ribosomal protein uS13 family. Part of the 30S ribosomal subunit. Forms a loose heterodimer with protein S19. Forms two bridges to the 50S subunit in the 70S ribosome.

Located at the top of the head of the 30S subunit, it contacts several helices of the 16S rRNA. In the 70S ribosome it contacts the 23S rRNA (bridge B1a) and protein L5 of the 50S subunit (bridge B1b), connecting the 2 subunits; these bridges are implicated in subunit movement. Contacts the tRNAs in the A and P-sites. In Mycoplasma sp, this protein is Small ribosomal subunit protein uS13.